We begin with the raw amino-acid sequence, 850 residues long: Tripartite terminase subunit 1 (850 aa).

Residues 191–219 (CAQCYEELTIIPNQGRSLNKRLQGLLCNH) form a C3H1-type zinc finger. The disordered stretch occupies residues 438–489 (GTTLMTASNSSNSSTHSQRNNGGGGRARGGGKKVVGGGVNGQDGDGSENGLR). The span at 439–457 (TTLMTASNSSNSSTHSQRN) shows a compositional bias: low complexity. Residues 458-481 (NGGGGRARGGGKKVVGGGVNGQDG) show a composition bias toward gly residues. Residue 709–716 (YNETFGKQ) coordinates ATP. Positions 801–831 (WLPSPYPSSSTAGVSRRVRATRKRPRRASSL) are disordered. Residues 816–827 (RRVRATRKRPRR) show a composition bias toward basic residues. The Nuclear localization signal signature appears at 822–827 (RKRPRR).

This sequence belongs to the herpesviridae TRM1 protein family. Associates with TRM2 and TRM3 to form the tripartite terminase complex. Interacts with portal protein.

It localises to the host nucleus. Its function is as follows. Component of the molecular motor that translocates viral genomic DNA in empty capsid during DNA packaging. Forms a tripartite terminase complex together with TRM2 and TRM3 in the host cytoplasm. Once the complex reaches the host nucleus, it interacts with the capsid portal vertex. This portal forms a ring in which genomic DNA is translocated into the capsid. TRM1 carries an endonuclease activity that plays an important role for the cleavage of concatemeric viral DNA into unit length genomes. The chain is Tripartite terminase subunit 1 from Homo sapiens (Human).